The sequence spans 362 residues: Heme A synthase (362 aa).

Helical transmembrane passes span alanine 11–glycine 31, valine 102–glycine 122, leucine 128–serine 148, valine 159–leucine 179, and alanine 198–leucine 218. Histidine 262 lines the heme pocket. Transmembrane regions (helical) follow at residues methionine 264–glycine 286, leucine 297–isoleucine 317, and serine 318–alanine 338. Histidine 323 serves as a coordination point for heme.

It belongs to the COX15/CtaA family. Type 2 subfamily. In terms of assembly, interacts with CtaB. Heme b is required as a cofactor.

The protein resides in the cell membrane. The catalysed reaction is Fe(II)-heme o + 2 A + H2O = Fe(II)-heme a + 2 AH2. It participates in porphyrin-containing compound metabolism; heme A biosynthesis; heme A from heme O: step 1/1. In terms of biological role, catalyzes the conversion of heme O to heme A by two successive hydroxylations of the methyl group at C8. The first hydroxylation forms heme I, the second hydroxylation results in an unstable dihydroxymethyl group, which spontaneously dehydrates, resulting in the formyl group of heme A. The protein is Heme A synthase of Bradyrhizobium sp. (strain ORS 278).